Reading from the N-terminus, the 155-residue chain is Transcription antitermination protein NusB (155 aa).

The protein belongs to the NusB family.

Involved in transcription antitermination. Required for transcription of ribosomal RNA (rRNA) genes. Binds specifically to the boxA antiterminator sequence of the ribosomal RNA (rrn) operons. This Vibrio atlanticus (strain LGP32) (Vibrio splendidus (strain Mel32)) protein is Transcription antitermination protein NusB.